Consider the following 480-residue polypeptide: Coronin-2B (480 aa).

WD repeat units follow at residues 85-125 (GHQG…LKRN), 135-177 (GHSR…KMID), 179-217 (HRDVILCMSFNTDGSLLATTCKDKKLRVLEPRSGRVLQE), 220-263 (CKTH…MPVT), and 265-308 (EEID…PYLT). Residues 436–475 (NELLRMFFRQQEEIRRLKEQLSQRDLLVRQLELELKNLRN) are a coiled coil.

This sequence belongs to the WD repeat coronin family.

The protein localises to the cytoplasm. It localises to the cytoskeleton. In terms of biological role, may play a role in the reorganization of neuronal actin structure. This Xenopus tropicalis (Western clawed frog) protein is Coronin-2B (coro2b).